The primary structure comprises 509 residues: Maturase K (509 aa).

The protein belongs to the intron maturase 2 family. MatK subfamily.

It is found in the plastid. Its subcellular location is the chloroplast. Its function is as follows. Usually encoded in the trnK tRNA gene intron. Probably assists in splicing its own and other chloroplast group II introns. The chain is Maturase K from Clematis vitalba (Evergreen clematis).